The sequence spans 490 residues: UDP-glycosyltransferase 86A1 (490 aa).

Residues serine 294, 352-354 (CCQ), 369-377 (HCGWNSILE), and 391-394 (LTDQ) contribute to the UDP-alpha-D-glucose site.

The protein belongs to the UDP-glycosyltransferase family.

This Arabidopsis thaliana (Mouse-ear cress) protein is UDP-glycosyltransferase 86A1 (UGT86A1).